Here is a 167-residue protein sequence, read N- to C-terminus: 2-C-methyl-D-erythritol 2,4-cyclodiphosphate synthase (167 aa).

Positions 9 and 11 each coordinate a divalent metal cation. Residues 9–11 (DVH) and 35–36 (HS) contribute to the 4-CDP-2-C-methyl-D-erythritol 2-phosphate site. A divalent metal cation is bound at residue H43. 4-CDP-2-C-methyl-D-erythritol 2-phosphate-binding positions include 57-59 (DIG), 62-66 (FPDTD), 133-136 (TTTE), F140, and R143.

Belongs to the IspF family. In terms of assembly, homotrimer. A divalent metal cation serves as cofactor.

The catalysed reaction is 4-CDP-2-C-methyl-D-erythritol 2-phosphate = 2-C-methyl-D-erythritol 2,4-cyclic diphosphate + CMP. The protein operates within isoprenoid biosynthesis; isopentenyl diphosphate biosynthesis via DXP pathway; isopentenyl diphosphate from 1-deoxy-D-xylulose 5-phosphate: step 4/6. Functionally, involved in the biosynthesis of isopentenyl diphosphate (IPP) and dimethylallyl diphosphate (DMAPP), two major building blocks of isoprenoid compounds. Catalyzes the conversion of 4-diphosphocytidyl-2-C-methyl-D-erythritol 2-phosphate (CDP-ME2P) to 2-C-methyl-D-erythritol 2,4-cyclodiphosphate (ME-CPP) with a corresponding release of cytidine 5-monophosphate (CMP). This is 2-C-methyl-D-erythritol 2,4-cyclodiphosphate synthase from Glaesserella parasuis serovar 5 (strain SH0165) (Haemophilus parasuis).